We begin with the raw amino-acid sequence, 506 residues long: MADITTEQQGEWLLEMKNISKSFPGVKALDNVNLNVRPHSIHALMGENGAGKSTLLKCLFGIYSKDAGSIIFQGQEVNFKNSKEALEQGVSMVHQELNLVLQRTVMDNMWLGRYPRKGMFVDHKKMYQDTKTIFDELDIDIDPRDKGATLSVSQMQIIEIAKAFSYDAKIVIMDEPTSSLTEKEVNHLFSIIRKLKARGCGIVYISHKMEEIFQLCDEITILRDGQWIATQPVEGLSMDQIIAMMVGRSLSQHFPDRISEPGEVMLEVRNLTSLRQPSIRDISFDLHQGEILGIAGLVGARRTDIVETLFGIREKSAGTIRLHGKNIKNSSANEAISHGFALVTEERRATGIYAFLDVGFNSLISNIRSYKNKMGLLNNTRMKSDIQWVINAMRVKTPGHSAHIGSLSGGNQQKVIIGRWLLTQPEILMLDEPTRGIDVGAKFEIYQLMTELAKRGKGIIIISSEMPELLGITDRILVMSNGQMVGMVNTKETSQNEILRLASLYL.

ABC transporter domains are found at residues 14–249 and 264–506; these read LEMK…VGRS and VMLE…SLYL. 46–53 is a binding site for ATP; sequence GENGAGKS.

The protein belongs to the ABC transporter superfamily. Galactose/methyl galactoside importer (TC 3.A.1.2.3) family. As to quaternary structure, the complex is composed of one ATP-binding protein (MglA), two transmembrane proteins (MglC) and a solute-binding protein (MglB).

It localises to the cell inner membrane. The catalysed reaction is D-galactose(out) + ATP + H2O = D-galactose(in) + ADP + phosphate + H(+). It carries out the reaction methyl beta-D-galactoside(out) + ATP + H2O = methyl beta-D-galactoside(in) + ADP + phosphate + H(+). Its function is as follows. Part of the ABC transporter complex MglABC involved in galactose/methyl galactoside import. Responsible for energy coupling to the transport system. The chain is Galactose/methyl galactoside import ATP-binding protein MglA from Sodalis glossinidius (strain morsitans).